The following is a 205-amino-acid chain: Cytochrome c biogenesis ATP-binding export protein CcmA (205 aa).

The ABC transporter domain occupies 2-204 (LEVSNLTAIR…SPKLRKIKLG (203 aa)). 34-41 (GRNGTGKT) provides a ligand contact to ATP.

The protein belongs to the ABC transporter superfamily. CcmA exporter (TC 3.A.1.107) family. In terms of assembly, the complex is composed of two ATP-binding proteins (CcmA) and two transmembrane proteins (CcmB).

The protein resides in the cell inner membrane. The catalysed reaction is heme b(in) + ATP + H2O = heme b(out) + ADP + phosphate + H(+). In terms of biological role, part of the ABC transporter complex CcmAB involved in the biogenesis of c-type cytochromes; once thought to export heme, this seems not to be the case, but its exact role is uncertain. Responsible for energy coupling to the transport system. The chain is Cytochrome c biogenesis ATP-binding export protein CcmA from Vibrio parahaemolyticus serotype O3:K6 (strain RIMD 2210633).